The chain runs to 295 residues: uncharacterized protein (295 aa).

This is an uncharacterized protein from Acanthamoeba polyphaga (Amoeba).